A 335-amino-acid polypeptide reads, in one-letter code: Dihydroorotate dehydrogenase (quinone) (335 aa).

FMN contacts are provided by residues 58–62 (AGADK) and Thr-82. Lys-62 is a substrate binding site. Residue 107 to 111 (NRNGF) participates in substrate binding. Residues Asn-135 and Asn-168 each contribute to the FMN site. Asn-168 contacts substrate. Ser-171 (nucleophile) is an active-site residue. Substrate is bound at residue Asn-173. FMN is bound by residues Lys-213 and Gly-241. 242-243 (NT) provides a ligand contact to substrate. Residues Gly-264, Gly-293, and 314–315 (YS) each bind FMN.

Belongs to the dihydroorotate dehydrogenase family. Type 2 subfamily. Monomer. FMN serves as cofactor.

Its subcellular location is the cell membrane. It catalyses the reaction (S)-dihydroorotate + a quinone = orotate + a quinol. It functions in the pathway pyrimidine metabolism; UMP biosynthesis via de novo pathway; orotate from (S)-dihydroorotate (quinone route): step 1/1. Functionally, catalyzes the conversion of dihydroorotate to orotate with quinone as electron acceptor. This is Dihydroorotate dehydrogenase (quinone) from Haemophilus ducreyi (strain 35000HP / ATCC 700724).